A 236-amino-acid polypeptide reads, in one-letter code: Demethylmenaquinone methyltransferase (236 aa).

S-adenosyl-L-methionine contacts are provided by residues Thr-62, Asp-80, 107 to 108 (DA), and Ser-124.

Belongs to the class I-like SAM-binding methyltransferase superfamily. MenG/UbiE family.

The enzyme catalyses a 2-demethylmenaquinol + S-adenosyl-L-methionine = a menaquinol + S-adenosyl-L-homocysteine + H(+). Its pathway is quinol/quinone metabolism; menaquinone biosynthesis; menaquinol from 1,4-dihydroxy-2-naphthoate: step 2/2. Functionally, methyltransferase required for the conversion of demethylmenaquinol (DMKH2) to menaquinol (MKH2). This is Demethylmenaquinone methyltransferase from Thermobifida fusca (strain YX).